We begin with the raw amino-acid sequence, 835 residues long: Protein translocase subunit SecA 1 (835 aa).

ATP is bound by residues Gln85, 103 to 107, and Asp492; that span reads GEGKT. Residues 788 to 807 are disordered; it reads VQGEAVHPSSDGEEAKKKPV. Zn(2+) is bound by residues Cys819, Cys821, Cys830, and Cys831.

The protein belongs to the SecA family. As to quaternary structure, monomer and homodimer. Part of the essential Sec protein translocation apparatus which comprises SecA, SecYEG and auxiliary proteins SecDF. Other proteins may also be involved. The cofactor is Zn(2+).

It is found in the cell membrane. It localises to the cytoplasm. It catalyses the reaction ATP + H2O + cellular proteinSide 1 = ADP + phosphate + cellular proteinSide 2.. Functionally, part of the Sec protein translocase complex. Interacts with the SecYEG preprotein conducting channel. Has a central role in coupling the hydrolysis of ATP to the transfer of proteins into and across the cell membrane, serving as an ATP-driven molecular motor driving the stepwise translocation of polypeptide chains across the membrane. The chain is Protein translocase subunit SecA 1 from Bacillus anthracis.